The primary structure comprises 290 residues: Inactive tau-tubulin kinase ttbk-6 (290 aa).

Positions 1–240 (MEDHVLKKLN…FWQVMENEKI (240 aa)) constitute a Protein kinase domain. 2 disordered regions span residues 244–263 (SKFD…AAWE) and 268–290 (RYFQ…DFVL).

This sequence belongs to the protein kinase superfamily. CK1 Ser/Thr protein kinase family.

The chain is Inactive tau-tubulin kinase ttbk-6 from Caenorhabditis elegans.